A 470-amino-acid polypeptide reads, in one-letter code: Putative multidrug resistance protein MdtD (470 aa).

Residues 1–11 (MTELPDNTRWQ) lie on the Periplasmic side of the membrane. The helical transmembrane segment at 12-32 (LWIVAFGFFMQSLDTTIVNTA) threads the bilayer. Residues 33–48 (LPSMAKSLGESPLHMH) are Cytoplasmic-facing. The helical transmembrane segment at 49–69 (MVVVSYVLTVAVMLPASGWLA) threads the bilayer. The Periplasmic segment spans residues 70-76 (DKIGVRN). The helical transmembrane segment at 77 to 97 (IFFAAIVLFTLGSLFCALSGT) threads the bilayer. The Cytoplasmic portion of the chain corresponds to 98-101 (LNQL). A helical transmembrane segment spans residues 102–124 (VLARVLQGVGGAMMVPVGRLTVM). Topologically, residues 125-137 (KIVPRAQYMAAMT) are periplasmic. Residues 138-158 (FVTLPGQIGPLLGPALGGVLV) traverse the membrane as a helical segment. Residues 159-164 (EYASWH) lie on the Cytoplasmic side of the membrane. Residues 165-185 (WIFLINIPVGIVGAMATFMLM) form a helical membrane-spanning segment. The Periplasmic portion of the chain corresponds to 186 to 196 (PNYTIETRRFD). Residues 197–217 (LPGFLLLAIGMAVLTLALDGS) traverse the membrane as a helical segment. Over 218–224 (KSMGISP) the chain is Cytoplasmic. A helical transmembrane segment spans residues 225–245 (WTLAGLAAGGAAAILLYLFHA). At 246-262 (KKNSGALFSLRLFRTPT) the chain is on the periplasmic side. Residues 263–283 (FSLGLLGSFAGRIGSGMLPFM) traverse the membrane as a helical segment. Over 284–285 (TP) the chain is Cytoplasmic. A helical membrane pass occupies residues 286-306 (VFLQIGLGFSPFHAGLMMIPM). At 307 to 341 (VLGSMGMKRIVVQIVNRFGYRRVLVATTLGLALVS) the chain is on the periplasmic side. A helical transmembrane segment spans residues 342 to 362 (LLFMSVALLGWYYLLPLVLLL). Topologically, residues 363–395 (QGMVNSARFSSMNTLTLKDLPDTLASSGNSLLS) are cytoplasmic. The helical transmembrane segment at 396 to 416 (MIMQLSMSIGVTIAGMLLGMF) threads the bilayer. Residues 417-430 (GQQHIGIDSSATHH) lie on the Periplasmic side of the membrane. A helical transmembrane segment spans residues 431–451 (VFMYTWLCMAVIIALPAIIFA). At 452 to 470 (RVPNDTQQNMVISRRKRSL) the chain is on the cytoplasmic side.

It belongs to the major facilitator superfamily. TCR/Tet family.

Its subcellular location is the cell inner membrane. In Salmonella agona (strain SL483), this protein is Putative multidrug resistance protein MdtD.